Consider the following 329-residue polypeptide: Mitochondrial substrate carrier family protein Q (329 aa).

Solcar repeat units follow at residues 18–115 (VEAL…LKSI), 125–206 (LGTI…LRAL), and 216–310 (LGGL…VVIH). 6 helical membrane-spanning segments follow: residues 21 to 41 (LGHAISGGVAGMAAIALTYPF), 95 to 115 (LIGIGASSFVYYYWYTLLKSI), 131 to 151 (LAIAALAGCANVLTTLPIWVV), 175 to 195 (GFGGLYKGLIPALILVSNPSV), 221 to 241 (VFILGAIAKLIAGIVTYPYLL), and 298 to 318 (AFMFLVKDKVVIHAVAILFYL).

The protein belongs to the mitochondrial carrier (TC 2.A.29) family.

The protein localises to the peroxisome membrane. Functionally, may have transport activity. This chain is Mitochondrial substrate carrier family protein Q (mcfQ), found in Dictyostelium discoideum (Social amoeba).